The following is a 297-amino-acid chain: MKFENCRDCREEVVWWAFTADICMTLFKGILGLMSGSVALVADSLHSGADVVASGVTQLSLKISNKPADERYPFGYGNIQYISSAIVGSLLLIGASFLMYGSVVKLISGTYEAPSIFAALGASVTVIVNELMYRYQICVGNENNSPAIIANAWDNRSDAISSAAVMVGVIASVIGFPIADTIAAIGVSALVGHIGLELIGKAVHGLMDSSVDTELLQTAWQIATDTPLVHSIYFLRGRHVGEDVQFDIRLRVDPNLRIKDSSMVAEAVRQRIQDEIPHARDIRLFVSPAPAAVTVRV.

Topologically, residues 1–12 are cytoplasmic; sequence MKFENCRDCREE. The tract at residues 1-214 is transmembrane domain (TMD); the sequence is MKFENCRDCR…GLMDSSVDTE (214 aa). Residues 13 to 33 traverse the membrane as a helical segment; that stretch reads VVWWAFTADICMTLFKGILGL. Residues 34 to 83 are Lumenal-facing; the sequence is MSGSVALVADSLHSGADVVASGVTQLSLKISNKPADERYPFGYGNIQYIS. Residues 84–104 traverse the membrane as a helical segment; the sequence is SAIVGSLLLIGASFLMYGSVV. The Cytoplasmic segment spans residues 105–112; sequence KLISGTYE. Residues 113–133 traverse the membrane as a helical segment; sequence APSIFAALGASVTVIVNELMY. Residues 134 to 164 lie on the Lumenal side of the membrane; that stretch reads RYQICVGNENNSPAIIANAWDNRSDAISSAA. Residues 165 to 185 traverse the membrane as a helical segment; the sequence is VMVGVIASVIGFPIADTIAAI. Over 186-297 the chain is Cytoplasmic; it reads GVSALVGHIG…PAPAAVTVRV (112 aa). Residues 215 to 297 are C-terminal domain (CTD); it reads LLQTAWQIAT…PAPAAVTVRV (83 aa).

This sequence belongs to the cation diffusion facilitator (CDF) transporter (TC 2.A.4) family. In terms of assembly, forms homodimers via its C-terminal domain, may form higher order multimers that are sensitive to reducing agent. Probably interacts with MamE. Interacts with MamM via their C-terminal domains.

It localises to the cell inner membrane. The protein localises to the magnetosome membrane. Functionally, plays a dual, essential role in magnetosome formation; required for magnetosome vesicle formation as well as biomineralization. Requires heterodimerization with MamM for stability. Probably binds and transports iron. One of 7 genes (mamLQBIEMO) able to induce magnetosome membrane biogenesis; coexpression of mamLQRBIEMO in a deletion of the 17 gene mamAB operon restores magnetosome vesicle formation but not magnetite biosynthesis. The sequence is that of Magnetosome protein MamB from Magnetospirillum gryphiswaldense (strain DSM 6361 / JCM 21280 / NBRC 15271 / MSR-1).